Consider the following 447-residue polypeptide: Putative FBD-associated F-box protein At1g61330 (447 aa).

The region spanning 10 to 57 (KLIKRLSDELVECILSFLPVQSTLQHRVLSKRYRDTWKLSRDLDFSGI) is the F-box domain. Positions 384-416 (VKIIGYKGHWHELDIVEFFVKNAPSLKRLELQM) constitute an FBD domain.

The polypeptide is Putative FBD-associated F-box protein At1g61330 (Arabidopsis thaliana (Mouse-ear cress)).